The chain runs to 510 residues: ATP synthase subunit alpha (510 aa).

Position 169 to 176 (169 to 176) interacts with ATP; it reads GDRQTGKT.

This sequence belongs to the ATPase alpha/beta chains family. F-type ATPases have 2 components, CF(1) - the catalytic core - and CF(0) - the membrane proton channel. CF(1) has five subunits: alpha(3), beta(3), gamma(1), delta(1), epsilon(1). CF(0) has three main subunits: a(1), b(2) and c(9-12). The alpha and beta chains form an alternating ring which encloses part of the gamma chain. CF(1) is attached to CF(0) by a central stalk formed by the gamma and epsilon chains, while a peripheral stalk is formed by the delta and b chains.

Its subcellular location is the cell inner membrane. It catalyses the reaction ATP + H2O + 4 H(+)(in) = ADP + phosphate + 5 H(+)(out). Produces ATP from ADP in the presence of a proton gradient across the membrane. The alpha chain is a regulatory subunit. This Nitrobacter hamburgensis (strain DSM 10229 / NCIMB 13809 / X14) protein is ATP synthase subunit alpha.